A 446-amino-acid polypeptide reads, in one-letter code: Mitochondrial ribonuclease P protein 1 homolog (446 aa).

The N-terminal 24 residues, 1–24 (MLKHFARWRLGSQLLKGCAAPVRQ), are a transit peptide targeting the mitochondrion. Residues 41-67 (PQKKFVNPFSQPAPALSNDTISENKEE) are disordered. A phosphoserine mark is found at Ser50 and Ser57. Phosphothreonine is present on Thr60. Residue Ser62 is modified to Phosphoserine. Positions 119–158 (LWQIEMKKEADQRKKAERAKEAERRVAEMRKEREENTHII) form a coiled coil. Residues 179–373 (QNNRLTRAMQ…KHVPRRKVVQ (195 aa)) enclose the SAM-dependent MTase TRM10-type domain.

Belongs to the class IV-like SAM-binding methyltransferase superfamily. TRM10 family. In terms of assembly, component of mitochondrial ribonuclease P, a complex composed of rswl/MRPP1, scu/MRPP2 and mldr/MRPP3.

It localises to the mitochondrion. Mitochondrial tRNA N1-methyltransferase involved in mitochondrial tRNA maturation. Component of mitochondrial ribonuclease P, a complex composed of rswl/MRPP1, scu/MRPP2 and mldr/MRPP3., which cleaves tRNA molecules in their 5'-ends. Essential for the structural and functional integrity of mitochondria. Function is essential for pupal development. The sequence is that of Mitochondrial ribonuclease P protein 1 homolog from Drosophila melanogaster (Fruit fly).